Here is a 257-residue protein sequence, read N- to C-terminus: Imidazole glycerol phosphate synthase subunit HisF (257 aa).

Catalysis depends on residues Asp-11 and Asp-130.

Belongs to the HisA/HisF family. Heterodimer of HisH and HisF.

The protein localises to the cytoplasm. The catalysed reaction is 5-[(5-phospho-1-deoxy-D-ribulos-1-ylimino)methylamino]-1-(5-phospho-beta-D-ribosyl)imidazole-4-carboxamide + L-glutamine = D-erythro-1-(imidazol-4-yl)glycerol 3-phosphate + 5-amino-1-(5-phospho-beta-D-ribosyl)imidazole-4-carboxamide + L-glutamate + H(+). Its pathway is amino-acid biosynthesis; L-histidine biosynthesis; L-histidine from 5-phospho-alpha-D-ribose 1-diphosphate: step 5/9. IGPS catalyzes the conversion of PRFAR and glutamine to IGP, AICAR and glutamate. The HisF subunit catalyzes the cyclization activity that produces IGP and AICAR from PRFAR using the ammonia provided by the HisH subunit. This Shewanella woodyi (strain ATCC 51908 / MS32) protein is Imidazole glycerol phosphate synthase subunit HisF.